The chain runs to 96 residues: Small ribosomal subunit protein bS6 (96 aa).

The protein belongs to the bacterial ribosomal protein bS6 family.

Functionally, binds together with bS18 to 16S ribosomal RNA. The sequence is that of Small ribosomal subunit protein bS6 from Bacillus mycoides (strain KBAB4) (Bacillus weihenstephanensis).